A 375-amino-acid chain; its full sequence is Probable UDP-N-acetylglucosamine 2-epimerase (375 aa).

It belongs to the UDP-N-acetylglucosamine 2-epimerase family.

It localises to the cytoplasm. The enzyme catalyses UDP-N-acetyl-alpha-D-glucosamine = UDP-N-acetyl-alpha-D-mannosamine. Its pathway is glycan metabolism; exopolysaccharide EPS I biosynthesis. May be involved in synthesis of N-acetyltrideoxygalactose, a component of exopolysaccharide EPS I which functions as a virulence factor. The chain is Probable UDP-N-acetylglucosamine 2-epimerase (epsC) from Ralstonia solanacearum (Pseudomonas solanacearum).